Consider the following 422-residue polypeptide: Dihydrolipoyllysine-residue succinyltransferase component of 2-oxoglutarate dehydrogenase complex (422 aa).

The 76-residue stretch at 1-76 (MPEVKVPELA…EVGQAIAIIG (76 aa)) folds into the Lipoyl-binding domain. N6-lipoyllysine is present on K42. Residues 77–185 (EGSGNASKEN…SAKEEKKYNQ (109 aa)) form a disordered region. Polar residues-rich tracts occupy residues 80–94 (GNASKENSNDNTPQQ) and 116–130 (NQANDDNQQRINATP). Residues 127–163 (NATPSARRYARENGVNLAEVSPKTNDVVRKEDIDKKQ) enclose the Peripheral subunit-binding (PSBD) domain. Residues 152-163 (DVVRKEDIDKKQ) are compositionally biased toward basic and acidic residues. A compositionally biased stretch (low complexity) spans 164 to 176 (QAPASTQTTQQAS). Residues H393 and D397 contribute to the active site.

It belongs to the 2-oxoacid dehydrogenase family. In terms of assembly, forms a 24-polypeptide structural core with octahedral symmetry. Part of the 2-oxoglutarate dehydrogenase (OGDH) complex composed of E1 (2-oxoglutarate dehydrogenase), E2 (dihydrolipoamide succinyltransferase) and E3 (dihydrolipoamide dehydrogenase); the complex contains multiple copies of the three enzymatic components (E1, E2 and E3). (R)-lipoate is required as a cofactor.

It carries out the reaction N(6)-[(R)-dihydrolipoyl]-L-lysyl-[protein] + succinyl-CoA = N(6)-[(R)-S(8)-succinyldihydrolipoyl]-L-lysyl-[protein] + CoA. It participates in amino-acid degradation; L-lysine degradation via saccharopine pathway; glutaryl-CoA from L-lysine: step 6/6. Its function is as follows. E2 component of the 2-oxoglutarate dehydrogenase (OGDH) complex which catalyzes the second step in the conversion of 2-oxoglutarate to succinyl-CoA and CO(2). The polypeptide is Dihydrolipoyllysine-residue succinyltransferase component of 2-oxoglutarate dehydrogenase complex (odhB) (Staphylococcus aureus (strain USA300)).